A 20-amino-acid chain; its full sequence is Antimicrobial peptide EP-20 (20 aa).

The interval 1 to 20 is disordered; sequence EGPVGLADPDGPASAPLGAP.

Its subcellular location is the secreted. Its function is as follows. The synthetic peptide inhibits growth of fungus P.capsici and partially that of V.dahliae, F.graminearum and F.omysporum. In Xenorhabdus budapestensis, this protein is Antimicrobial peptide EP-20.